Reading from the N-terminus, the 70-residue chain is Small ribosomal subunit protein bS21B (70 aa).

Belongs to the bacterial ribosomal protein bS21 family.

This Burkholderia thailandensis (strain ATCC 700388 / DSM 13276 / CCUG 48851 / CIP 106301 / E264) protein is Small ribosomal subunit protein bS21B.